The primary structure comprises 508 residues: ATP synthase subunit alpha (508 aa).

G169–S176 is an ATP binding site.

Belongs to the ATPase alpha/beta chains family. In terms of assembly, F-type ATPases have 2 components, CF(1) - the catalytic core - and CF(0) - the membrane proton channel. CF(1) has five subunits: alpha(3), beta(3), gamma(1), delta(1), epsilon(1). CF(0) has three main subunits: a(1), b(2) and c(9-12). The alpha and beta chains form an alternating ring which encloses part of the gamma chain. CF(1) is attached to CF(0) by a central stalk formed by the gamma and epsilon chains, while a peripheral stalk is formed by the delta and b chains.

It is found in the cell membrane. The enzyme catalyses ATP + H2O + 4 H(+)(in) = ADP + phosphate + 5 H(+)(out). Produces ATP from ADP in the presence of a proton gradient across the membrane. The alpha chain is a regulatory subunit. The polypeptide is ATP synthase subunit alpha (Natranaerobius thermophilus (strain ATCC BAA-1301 / DSM 18059 / JW/NM-WN-LF)).